A 192-amino-acid polypeptide reads, in one-letter code: Rhomboid protease GlpG (192 aa).

At 1-10 (MKNFLAQQGK) the chain is on the cytoplasmic side. The helical transmembrane segment at 11–31 (ITLILTALCVLIYLAQQLGFE) threads the bilayer. Residues 32 to 57 (DDIMYLMHYPAYEEQDSEVWRYISHT) lie on the Periplasmic side of the membrane. A helical membrane pass occupies residues 58-78 (LVHLSNLHILFNLSWFFIFGG). The Cytoplasmic portion of the chain corresponds to 79–82 (MIER). The chain crosses the membrane as a helical span at residues 83–103 (TFGSVKLLMLYVVASAITGYV). Residues 104 to 107 (QNYV) are Periplasmic-facing. Residues 108 to 128 (SGPAFFGLSGVVYAVLGYVFI) form a helical membrane-spanning segment. Residue S116 is the Nucleophile of the active site. The Cytoplasmic portion of the chain corresponds to 129-141 (RDKLNHHLFDLPE). Residues 142-162 (GFFTMLLVGIALGFISPLFGV) traverse the membrane as a helical segment. E163 is a topological domain (periplasmic). Residues 164-184 (MGNAAHISGLIVGLIWGFIDS) form a helical membrane-spanning segment. Residue H169 is part of the active site. Over 185 to 192 (KLRKNSLE) the chain is Cytoplasmic.

This sequence belongs to the peptidase S54 family.

The protein resides in the cell inner membrane. The catalysed reaction is Cleaves type-1 transmembrane domains using a catalytic dyad composed of serine and histidine that are contributed by different transmembrane domains.. Functionally, rhomboid-type serine protease that catalyzes intramembrane proteolysis. The chain is Rhomboid protease GlpG (glpG) from Haemophilus influenzae (strain ATCC 51907 / DSM 11121 / KW20 / Rd).